Here is a 346-residue protein sequence, read N- to C-terminus: Small glutamine-rich tetratricopeptide repeat-containing protein 2 (346 aa).

TPR repeat units lie at residues Ala102–Asn135, Ala136–Tyr169, Phe170–Asn203, and Thr205–Val229. The disordered stretch occupies residues Val219 to Leu249. Residues Thr228–Asp237 are compositionally biased toward basic and acidic residues. Thr308 is subject to Phosphothreonine. The segment at Gly325–Gln346 is disordered.

It belongs to the SGT family. Interacts with HSC82, HSP104, MDY2, SSA1 and SSA2.

It is found in the cytoplasm. Co-chaperone that binds to the molecular chaperone Hsp70 (SSA1 and SSA2). Regulates Hsp70 ATPase activity. Required for recovery from heat shock. The chain is Small glutamine-rich tetratricopeptide repeat-containing protein 2 (SGT2) from Saccharomyces cerevisiae (strain ATCC 204508 / S288c) (Baker's yeast).